Consider the following 427-residue polypeptide: CD209 antigen (427 aa).

Over 1–37 the chain is Cytoplasmic; that stretch reads MSDSKEPRLQQLGLLEEEQLRGLGFRQTRGYKSLAGC. Short sequence motifs (endocytosis signal) lie at residues 14–15, 16–18, and 31–34; these read LL, EEE, and YKSL. Residues 38-58 form a helical; Signal-anchor for type II membrane protein membrane-spanning segment; it reads LGHGPLVLQLLSFTLLAALLV. Topologically, residues 59 to 427 are extracellular; the sequence is QVSKVPSSIS…ASATPNPPPE (369 aa). N80 carries N-linked (GlcNAc...) asparagine glycosylation. Repeat copies occupy residues 96–118, 119–141, 142–164, 165–187, 188–210, 211–233, 234–256, and 257–280. An 8 X approximate tandem repeats region spans residues 96 to 280; the sequence is KLQEIYQELT…AVERLCRRCP (185 aa). 3 disulfide bridges follow: C279–C290, C307–C400, and C379–C392. In terms of domain architecture, C-type lectin spans 286-401; that stretch reads FQGNCYFMSN…CNLAKFWICK (116 aa). Ca(2+)-binding residues include E370, N372, V374, E377, N388, and D389.

Homotetramer. Interacts with C1QBP; the interaction is indicative for a C1q:C1QBP:CD209 signaling complex. Interacts with ICAM2 and ICAM3 by binding to mannose-like carbohydrates. Interacts (via C-type lectin domain) with CEACAM1 (via Lewis X moieties); this interaction is regulated by the glycosylation pattern of CEACAM1 on cell types and regulates contact between dendritic cells and neutrophils.

It localises to the membrane. Its function is as follows. Pathogen-recognition receptor expressed on the surface of immature dendritic cells (DCs) and involved in initiation of primary immune response. Thought to mediate the endocytosis of pathogens which are subsequently degraded in lysosomal compartments. The receptor returns to the cell membrane surface and the pathogen-derived antigens are presented to resting T-cells via MHC class II proteins to initiate the adaptive immune response. Probably recognizes in a calcium-dependent manner high mannose N-linked oligosaccharides in a variety of pathogen antigens. Functionally, on DCs it is a high affinity receptor for ICAM2 and ICAM3 by binding to mannose-like carbohydrates. May act as a DC rolling receptor that mediates transendothelial migration of DC presursors from blood to tissues by binding endothelial ICAM2. Seems to regulate DC-induced T-cell proliferation by binding to ICAM3 on T-cells in the immunological synapse formed between DC and T-cells. In Gorilla gorilla gorilla (Western lowland gorilla), this protein is CD209 antigen (CD209).